We begin with the raw amino-acid sequence, 554 residues long: Arginine--tRNA ligase (554 aa).

The 'HIGH' region motif lies at 129–139 (ANPTGPLHIGH).

This sequence belongs to the class-I aminoacyl-tRNA synthetase family. Monomer.

The protein localises to the cytoplasm. The catalysed reaction is tRNA(Arg) + L-arginine + ATP = L-arginyl-tRNA(Arg) + AMP + diphosphate. The polypeptide is Arginine--tRNA ligase (Citrifermentans bemidjiense (strain ATCC BAA-1014 / DSM 16622 / JCM 12645 / Bem) (Geobacter bemidjiensis)).